Consider the following 176-residue polypeptide: Acireductone dioxygenase (176 aa).

The interval 1–21 (MKAYWYDNKPGDQREPHDSGR) is disordered. Over residues 9-20 (KPGDQREPHDSG) the composition is skewed to basic and acidic residues. Residues H81, H83, E87, and H126 each coordinate Fe(2+). Ni(2+) contacts are provided by H81, H83, E87, and H126.

It belongs to the acireductone dioxygenase (ARD) family. Requires Fe(2+) as cofactor. Ni(2+) is required as a cofactor.

The protein resides in the cytoplasm. It is found in the nucleus. It carries out the reaction 1,2-dihydroxy-5-(methylsulfanyl)pent-1-en-3-one + O2 = 4-methylsulfanyl-2-oxobutanoate + formate + 2 H(+). The catalysed reaction is 1,2-dihydroxy-5-(methylsulfanyl)pent-1-en-3-one + O2 = 3-(methylsulfanyl)propanoate + CO + formate + 2 H(+). It functions in the pathway amino-acid biosynthesis; L-methionine biosynthesis via salvage pathway; L-methionine from S-methyl-5-thio-alpha-D-ribose 1-phosphate: step 5/6. Catalyzes 2 different reactions between oxygen and the acireductone 1,2-dihydroxy-3-keto-5-methylthiopentene (DHK-MTPene) depending upon the metal bound in the active site. Fe-containing acireductone dioxygenase (Fe-ARD) produces formate and 2-keto-4-methylthiobutyrate (KMTB), the alpha-ketoacid precursor of methionine in the methionine recycle pathway. Ni-containing acireductone dioxygenase (Ni-ARD) produces methylthiopropionate, carbon monoxide and formate, and does not lie on the methionine recycle pathway. The sequence is that of Acireductone dioxygenase (adi1) from Aspergillus fumigatus (strain ATCC MYA-4609 / CBS 101355 / FGSC A1100 / Af293) (Neosartorya fumigata).